We begin with the raw amino-acid sequence, 281 residues long: Pantothenate synthetase (281 aa).

30 to 37 (MGYLHEGH) lines the ATP pocket. Histidine 37 functions as the Proton donor in the catalytic mechanism. Glutamine 61 lines the (R)-pantoate pocket. A beta-alanine-binding site is contributed by glutamine 61. 147–150 (GEKD) is a binding site for ATP. A (R)-pantoate-binding site is contributed by glutamine 153. Residues valine 176 and 184–187 (MSSR) contribute to the ATP site.

Belongs to the pantothenate synthetase family. Homodimer.

Its subcellular location is the cytoplasm. It catalyses the reaction (R)-pantoate + beta-alanine + ATP = (R)-pantothenate + AMP + diphosphate + H(+). It functions in the pathway cofactor biosynthesis; (R)-pantothenate biosynthesis; (R)-pantothenate from (R)-pantoate and beta-alanine: step 1/1. In terms of biological role, catalyzes the condensation of pantoate with beta-alanine in an ATP-dependent reaction via a pantoyl-adenylate intermediate. The chain is Pantothenate synthetase from Desulfatibacillum aliphaticivorans.